A 113-amino-acid polypeptide reads, in one-letter code: uncharacterized protein (113 aa).

Disordered regions lie at residues 1-22 (MGEHAIKRHMRQRKPTKHPLAQ) and 90-113 (DGRHTTESSFEHSSPSRSPQSDDL). Basic and acidic residues predominate over residues 90–99 (DGRHTTESSF). Positions 100–113 (EHSSPSRSPQSDDL) are enriched in low complexity.

This is an uncharacterized protein from Mycobacterium tuberculosis (strain ATCC 25618 / H37Rv).